A 109-amino-acid chain; its full sequence is Nucleoid-associated protein APL_0075 (109 aa).

The interval 1-21 (MFGKGGLGGLMKQAQQMQERM) is disordered. Residues 10 to 19 (LMKQAQQMQE) are compositionally biased toward low complexity.

It belongs to the YbaB/EbfC family. Homodimer.

It localises to the cytoplasm. The protein localises to the nucleoid. Binds to DNA and alters its conformation. May be involved in regulation of gene expression, nucleoid organization and DNA protection. In Actinobacillus pleuropneumoniae serotype 5b (strain L20), this protein is Nucleoid-associated protein APL_0075.